The following is a 143-amino-acid chain: MFMGEYEHQLDAKGRMIVPSKFRYELNERFVITRGLDKCLFGYTLEEWQNIEEKMKSLPMTKRDARKFMRMFFSGAVEVELDKQGRINIPKNLREYANLTKECTVIGVSNRIEIWDRASWNGFYDESEDSFEDIAEDLIDFDF.

SpoVT-AbrB domains are found at residues 5-47 (EYEH…TLEE) and 76-119 (AVEV…DRAS).

Belongs to the MraZ family. In terms of assembly, forms oligomers.

It localises to the cytoplasm. Its subcellular location is the nucleoid. The sequence is that of Transcriptional regulator MraZ from Staphylococcus carnosus (strain TM300).